The chain runs to 642 residues: MPVITLPDGSQRHYDHAVSPLDVALDIGPGLAKACIAGRVDGELIDASDKIDTDAQLAIITAKDDAGLEIIRHSCAHLLGHAIKQLWPDTKMAIGPVIDNGFYYDVDIDRTLTQEDIELLEKRMHELADTDYDVIKKKVSWQEARDAFAARGETYKIAILDENISHDDRPGLYHHEEYIDMCRGPHVPNMRFCHHFKLQKTSGAYWRGDSKNKMLQRIYGTAWADKKQLASYLQRLEEASKRDHRKIGKQLDLYHMQEEAPGMVFWHNDGWTIFRELEAFVRMKLKSYQYQEVKGPFMMDRVMWEKTGHWDNYKEAMFTTSSENREYCIKPMNCPGHVQIFNQGLKSYRDLPLRMAEFGSCHRNEPSGSLHGLMRVRGFTQDDAHIFCTEEQVRDEVNSCIKMVYDMYSTFGFEKIVVKLSTRPEKRIGSDEMWDRAEADLAAALTENNIEFAYQPGEGAFYGPKIEFTLHDCLDRAWQCGTVQLDFSLPGRLSASYVGESNERQVPVMIHRAILGSMERFIGILTEEFAGFFPTWLAPVQVVIINITDSQSDYVNELTQKLQEAGIRVKADLRNEKIGFKIREHTLRRVPYMLVCGDKEVEAGKVAVRTRRGKDLGSLDVSEVISKLQQEIRSRSLHQLEV.

A TGS domain is found at 1–61; the sequence is MPVITLPDGS…DTDAQLAIIT (61 aa). The segment at 243-534 is catalytic; the sequence is DHRKIGKQLD…LTEEFAGFFP (292 aa). Positions 334, 385, and 511 each coordinate Zn(2+).

Belongs to the class-II aminoacyl-tRNA synthetase family. In terms of assembly, homodimer. Requires Zn(2+) as cofactor.

It is found in the cytoplasm. The catalysed reaction is tRNA(Thr) + L-threonine + ATP = L-threonyl-tRNA(Thr) + AMP + diphosphate + H(+). In terms of biological role, catalyzes the attachment of threonine to tRNA(Thr) in a two-step reaction: L-threonine is first activated by ATP to form Thr-AMP and then transferred to the acceptor end of tRNA(Thr). Also edits incorrectly charged L-seryl-tRNA(Thr). This Pectobacterium atrosepticum (strain SCRI 1043 / ATCC BAA-672) (Erwinia carotovora subsp. atroseptica) protein is Threonine--tRNA ligase.